A 333-amino-acid chain; its full sequence is GTP 3',8-cyclase (333 aa).

Residues 7-221 (KFGRVHDYIR…FEACDAIGFE (215 aa)) form the Radical SAM core domain. R16 contacts GTP. [4Fe-4S] cluster is bound by residues C23 and C27. S-adenosyl-L-methionine is bound at residue Y29. C30 provides a ligand contact to [4Fe-4S] cluster. R66 provides a ligand contact to GTP. An S-adenosyl-L-methionine-binding site is contributed by G70. T97 contacts GTP. S121 contacts S-adenosyl-L-methionine. K158 lines the GTP pocket. M192 is a binding site for S-adenosyl-L-methionine. C257 and C260 together coordinate [4Fe-4S] cluster. 262 to 264 (RLR) is a binding site for GTP. [4Fe-4S] cluster is bound at residue C274.

The protein belongs to the radical SAM superfamily. MoaA family. In terms of assembly, monomer and homodimer. The cofactor is [4Fe-4S] cluster.

It catalyses the reaction GTP + AH2 + S-adenosyl-L-methionine = (8S)-3',8-cyclo-7,8-dihydroguanosine 5'-triphosphate + 5'-deoxyadenosine + L-methionine + A + H(+). The protein operates within cofactor biosynthesis; molybdopterin biosynthesis. Its function is as follows. Catalyzes the cyclization of GTP to (8S)-3',8-cyclo-7,8-dihydroguanosine 5'-triphosphate. The chain is GTP 3',8-cyclase from Listeria welshimeri serovar 6b (strain ATCC 35897 / DSM 20650 / CCUG 15529 / CIP 8149 / NCTC 11857 / SLCC 5334 / V8).